The primary structure comprises 221 residues: Octanoyltransferase (221 aa).

The region spanning 38–220 (GEIPDTLLLL…GFREVLGDPG (183 aa)) is the BPL/LPL catalytic domain. Substrate-binding positions include 84–91 (RGGDATFH), 149–151 (AIG), and 163–165 (GFA). Cys181 acts as the Acyl-thioester intermediate in catalysis.

Belongs to the LipB family.

The protein localises to the cytoplasm. It carries out the reaction octanoyl-[ACP] + L-lysyl-[protein] = N(6)-octanoyl-L-lysyl-[protein] + holo-[ACP] + H(+). The protein operates within protein modification; protein lipoylation via endogenous pathway; protein N(6)-(lipoyl)lysine from octanoyl-[acyl-carrier-protein]: step 1/2. Catalyzes the transfer of endogenously produced octanoic acid from octanoyl-acyl-carrier-protein onto the lipoyl domains of lipoate-dependent enzymes. Lipoyl-ACP can also act as a substrate although octanoyl-ACP is likely to be the physiological substrate. In Rubrobacter xylanophilus (strain DSM 9941 / JCM 11954 / NBRC 16129 / PRD-1), this protein is Octanoyltransferase.